Consider the following 340-residue polypeptide: Phosphoribosylformylglycinamidine cyclo-ligase (340 aa).

This sequence belongs to the AIR synthase family.

Its subcellular location is the cytoplasm. The enzyme catalyses 2-formamido-N(1)-(5-O-phospho-beta-D-ribosyl)acetamidine + ATP = 5-amino-1-(5-phospho-beta-D-ribosyl)imidazole + ADP + phosphate + H(+). Its pathway is purine metabolism; IMP biosynthesis via de novo pathway; 5-amino-1-(5-phospho-D-ribosyl)imidazole from N(2)-formyl-N(1)-(5-phospho-D-ribosyl)glycinamide: step 2/2. This chain is Phosphoribosylformylglycinamidine cyclo-ligase, found in Streptococcus pyogenes serotype M12 (strain MGAS2096).